The sequence spans 813 residues: Calpain-7 (813 aa).

Position 1 is an N-acetylmethionine (M1). Position 95 is a phosphothreonine (T95). In terms of domain architecture, Calpain catalytic spans 232–540; the sequence is RERFAYPMPF…YDVVYLSWNP (309 aa). Active-site residues include C290, H458, and N478. Residues 541 to 701 form a domain III region; it reads ALFKESTCIH…INGKWSGQSA (161 aa). Positions 702–813 are domain N; it reads GGCGNFQETH…TVPIKTTQLQ (112 aa).

Belongs to the peptidase C2 family. In terms of tissue distribution, ubiquitous.

It localises to the nucleus. Calcium-regulated non-lysosomal thiol-protease. This chain is Calpain-7 (Capn7), found in Mus musculus (Mouse).